A 445-amino-acid chain; its full sequence is Phosphoglucosamine mutase (445 aa).

Catalysis depends on serine 102, which acts as the Phosphoserine intermediate. The Mg(2+) site is built by serine 102, aspartate 241, aspartate 243, and aspartate 245. Serine 102 is subject to Phosphoserine.

It belongs to the phosphohexose mutase family. Mg(2+) serves as cofactor. In terms of processing, activated by phosphorylation.

The enzyme catalyses alpha-D-glucosamine 1-phosphate = D-glucosamine 6-phosphate. Catalyzes the conversion of glucosamine-6-phosphate to glucosamine-1-phosphate. The polypeptide is Phosphoglucosamine mutase (Variovorax paradoxus (strain S110)).